The sequence spans 1423 residues: uncharacterized protein (1423 aa).

The first 28 residues, 1-28 (MTSSVRLAFLATLLLLLPLEAQIQQANS), serve as a signal peptide directing secretion. Residues 29-1321 (ANVNQNVGQQ…RSREKQNFLT (1293 aa)) are Extracellular-facing. N-linked (GlcNAc...) asparagine glycosylation is found at asparagine 94, asparagine 306, asparagine 355, asparagine 483, asparagine 666, and asparagine 903. An NIDO domain is found at 184 to 347 (SFFGQSASKA…GRYMFRVDDV (164 aa)). Residues 638–818 (VKKKSLEMCH…FRCQMFYWRR (181 aa)) enclose the AMOP domain. The chain crosses the membrane as a helical span at residues 1322-1342 (WLAIIGGIFGVLVFVILIFLC). At 1343-1423 (CWIVKQKKKG…EDLHGLKTSV (81 aa)) the chain is on the cytoplasmic side. The disordered stretch occupies residues 1364-1401 (SRSSMTGSRGGKKYPIHESEPLNEKRFDADTYRDDDFY). Over residues 1378 to 1401 (PIHESEPLNEKRFDADTYRDDDFY) the composition is skewed to basic and acidic residues.

It localises to the membrane. This is an uncharacterized protein from Caenorhabditis elegans.